A 110-amino-acid chain; its full sequence is uncharacterized protein (110 aa).

The protein resides in the mitochondrion. This is an uncharacterized protein from Arabidopsis thaliana (Mouse-ear cress).